Consider the following 142-residue polypeptide: Probable inactive dual specificity protein phosphatase-like At4g18593 (142 aa).

The protein belongs to the protein-tyrosine phosphatase family. Non-receptor class dual specificity subfamily.

The polypeptide is Probable inactive dual specificity protein phosphatase-like At4g18593 (Arabidopsis thaliana (Mouse-ear cress)).